The primary structure comprises 446 residues: MREILHIQGGQCGNQIGAKFWEVVCDEHGIDPTGRYTGNSDLQLERVNVYYNEASCGRFVPRAVLMDLEPGTMDSVRTGPYGQIFRPDNFVFGQSGAGNNWAKGHYTEGAELIDSVLDVVRKEAENCDCLQGFQVCHSLGGGTGSGMGTLLISKIREEYPDRMMLTFSVFPSPKVSDTVVEPYNATLSVHQLVENADECMVLDNEALYDICFRTLKLTTPSFGDLNHLISATMSGVTCCLRFPGQLNSDLRKLAVNLIPFPRLHFFMVGFAPLTSRGSQQYRALTVPELTQQMWDAKNMMCAADPRHGRYLTASAMFRGKMSTKEVDEQMINVQNKNSSYFVEWIPNNVKSSVCDIPPRGLSMASTFIGNSTSIQEMFRRVSEQFTAMFRRKAFLHWYTGEGMDEMEFTEAESNMNDLVSEYQQYQDATADEEEYEDEEEVQADDM.

GTP-binding residues include Q11, E69, S138, G142, T143, G144, N204, and N226. Position 69 (E69) interacts with Mg(2+). Residues 426–446 form a disordered region; it reads QDATADEEEYEDEEEVQADDM. Over residues 429-446 the composition is skewed to acidic residues; that stretch reads TADEEEYEDEEEVQADDM.

The protein belongs to the tubulin family. In terms of assembly, dimer of alpha and beta chains. A typical microtubule is a hollow water-filled tube with an outer diameter of 25 nm and an inner diameter of 15 nM. Alpha-beta heterodimers associate head-to-tail to form protofilaments running lengthwise along the microtubule wall with the beta-tubulin subunit facing the microtubule plus end conferring a structural polarity. Microtubules usually have 13 protofilaments but different protofilament numbers can be found in some organisms and specialized cells. The cofactor is Mg(2+).

The protein localises to the cytoplasm. The protein resides in the cytoskeleton. Its function is as follows. Tubulin is the major constituent of microtubules, a cylinder consisting of laterally associated linear protofilaments composed of alpha- and beta-tubulin heterodimers. Microtubules grow by the addition of GTP-tubulin dimers to the microtubule end, where a stabilizing cap forms. Below the cap, tubulin dimers are in GDP-bound state, owing to GTPase activity of alpha-tubulin. This Zea mays (Maize) protein is Tubulin beta-6 chain (TUBB6).